The sequence spans 239 residues: Probable transcriptional regulatory protein lin0388 (239 aa).

The protein belongs to the TACO1 family. YeeN subfamily.

It localises to the cytoplasm. In Listeria innocua serovar 6a (strain ATCC BAA-680 / CLIP 11262), this protein is Probable transcriptional regulatory protein lin0388.